A 178-amino-acid polypeptide reads, in one-letter code: ATP-dependent protease subunit HslV (178 aa).

Thr8 is an active-site residue. Na(+)-binding residues include Gly163, Cys166, and Thr169.

Belongs to the peptidase T1B family. HslV subfamily. In terms of assembly, a double ring-shaped homohexamer of HslV is capped on each side by a ring-shaped HslU homohexamer. The assembly of the HslU/HslV complex is dependent on binding of ATP.

The protein localises to the cytoplasm. It carries out the reaction ATP-dependent cleavage of peptide bonds with broad specificity.. Its activity is regulated as follows. Allosterically activated by HslU binding. Its function is as follows. Protease subunit of a proteasome-like degradation complex believed to be a general protein degrading machinery. The sequence is that of ATP-dependent protease subunit HslV from Xylella fastidiosa (strain 9a5c).